Reading from the N-terminus, the 341-residue chain is tRNA N6-adenosine threonylcarbamoyltransferase (341 aa).

Residues His-111 and His-115 each contribute to the Fe cation site. Residues 134–138 (LVSGG), Asp-167, Gly-180, and Asn-276 each bind substrate. Asp-304 lines the Fe cation pocket.

This sequence belongs to the KAE1 / TsaD family. Requires Fe(2+) as cofactor.

The protein resides in the cytoplasm. It carries out the reaction L-threonylcarbamoyladenylate + adenosine(37) in tRNA = N(6)-L-threonylcarbamoyladenosine(37) in tRNA + AMP + H(+). Functionally, required for the formation of a threonylcarbamoyl group on adenosine at position 37 (t(6)A37) in tRNAs that read codons beginning with adenine. Is involved in the transfer of the threonylcarbamoyl moiety of threonylcarbamoyl-AMP (TC-AMP) to the N6 group of A37, together with TsaE and TsaB. TsaD likely plays a direct catalytic role in this reaction. The sequence is that of tRNA N6-adenosine threonylcarbamoyltransferase from Ectopseudomonas mendocina (strain ymp) (Pseudomonas mendocina).